Here is a 347-residue protein sequence, read N- to C-terminus: uncharacterized protein (347 aa).

This is an uncharacterized protein from Invertebrate iridescent virus 3 (IIV-3).